The following is a 179-amino-acid chain: Acireductone dioxygenase (179 aa).

Residues His97, His99, Glu103, and His141 each contribute to the Fe(2+) site. Positions 97, 99, 103, and 141 each coordinate Ni(2+).

It belongs to the acireductone dioxygenase (ARD) family. As to quaternary structure, monomer. It depends on Fe(2+) as a cofactor. The cofactor is Ni(2+).

It carries out the reaction 1,2-dihydroxy-5-(methylsulfanyl)pent-1-en-3-one + O2 = 3-(methylsulfanyl)propanoate + CO + formate + 2 H(+). It catalyses the reaction 1,2-dihydroxy-5-(methylsulfanyl)pent-1-en-3-one + O2 = 4-methylsulfanyl-2-oxobutanoate + formate + 2 H(+). The protein operates within amino-acid biosynthesis; L-methionine biosynthesis via salvage pathway; L-methionine from S-methyl-5-thio-alpha-D-ribose 1-phosphate: step 5/6. Its function is as follows. Catalyzes 2 different reactions between oxygen and the acireductone 1,2-dihydroxy-3-keto-5-methylthiopentene (DHK-MTPene) depending upon the metal bound in the active site. Fe-containing acireductone dioxygenase (Fe-ARD) produces formate and 2-keto-4-methylthiobutyrate (KMTB), the alpha-ketoacid precursor of methionine in the methionine recycle pathway. Ni-containing acireductone dioxygenase (Ni-ARD) produces methylthiopropionate, carbon monoxide and formate, and does not lie on the methionine recycle pathway. In Granulibacter bethesdensis (strain ATCC BAA-1260 / CGDNIH1), this protein is Acireductone dioxygenase.